A 189-amino-acid chain; its full sequence is Holliday junction branch migration complex subunit RuvA (189 aa).

Residues 1 to 63 (MIHALNGKVE…DDGISLYGFL (63 aa)) form a domain I region. The segment at 64-135 (EVIKLKLFEK…ELKDTIKELD (72 aa)) is domain II. The tract at residues 135 to 139 (DVSIN) is flexible linker. The segment at 140–189 (EKDRKVLEAIEALVTLGFNRNQAKKAVNKVAAKDDKLDDIIKKALRFLSR) is domain III.

Belongs to the RuvA family. In terms of assembly, homotetramer. Forms an RuvA(8)-RuvB(12)-Holliday junction (HJ) complex. HJ DNA is sandwiched between 2 RuvA tetramers; dsDNA enters through RuvA and exits via RuvB. An RuvB hexamer assembles on each DNA strand where it exits the tetramer. Each RuvB hexamer is contacted by two RuvA subunits (via domain III) on 2 adjacent RuvB subunits; this complex drives branch migration. In the full resolvosome a probable DNA-RuvA(4)-RuvB(12)-RuvC(2) complex forms which resolves the HJ.

Its subcellular location is the cytoplasm. Its function is as follows. The RuvA-RuvB-RuvC complex processes Holliday junction (HJ) DNA during genetic recombination and DNA repair, while the RuvA-RuvB complex plays an important role in the rescue of blocked DNA replication forks via replication fork reversal (RFR). RuvA specifically binds to HJ cruciform DNA, conferring on it an open structure. The RuvB hexamer acts as an ATP-dependent pump, pulling dsDNA into and through the RuvAB complex. HJ branch migration allows RuvC to scan DNA until it finds its consensus sequence, where it cleaves and resolves the cruciform DNA. This Thermosipho africanus (strain TCF52B) protein is Holliday junction branch migration complex subunit RuvA.